A 347-amino-acid polypeptide reads, in one-letter code: Protein phosphatase 1 regulatory subunit 3G (347 aa).

Residues Met-1–Ala-77 form a disordered region. Residues Ala-13 to Pro-22 show a composition bias toward polar residues. Ser-81 carries the phosphoserine modification. In terms of domain architecture, CBM21 spans Glu-200 to Arg-339. Residues Asp-258–Thr-286 form a disordered region.

In terms of biological role, glycogen-targeting subunit for protein phosphatase 1 (PP1). Involved in the regulation of hepatic glycogenesis in a manner coupled to the fasting-feeding cycle and distinct from other glycogen-targeting subunits. The polypeptide is Protein phosphatase 1 regulatory subunit 3G (Ppp1r3g) (Mus musculus (Mouse)).